The primary structure comprises 210 residues: Imidazole glycerol phosphate synthase subunit HisH (210 aa).

The 208-residue stretch at 3–210 (TIAIIDYGMG…ILKNFALSKA (208 aa)) folds into the Glutamine amidotransferase type-1 domain. The Nucleophile role is filled by cysteine 81. Catalysis depends on residues histidine 190 and glutamate 192.

As to quaternary structure, heterodimer of HisH and HisF.

The protein resides in the cytoplasm. It carries out the reaction 5-[(5-phospho-1-deoxy-D-ribulos-1-ylimino)methylamino]-1-(5-phospho-beta-D-ribosyl)imidazole-4-carboxamide + L-glutamine = D-erythro-1-(imidazol-4-yl)glycerol 3-phosphate + 5-amino-1-(5-phospho-beta-D-ribosyl)imidazole-4-carboxamide + L-glutamate + H(+). The catalysed reaction is L-glutamine + H2O = L-glutamate + NH4(+). The protein operates within amino-acid biosynthesis; L-histidine biosynthesis; L-histidine from 5-phospho-alpha-D-ribose 1-diphosphate: step 5/9. IGPS catalyzes the conversion of PRFAR and glutamine to IGP, AICAR and glutamate. The HisH subunit catalyzes the hydrolysis of glutamine to glutamate and ammonia as part of the synthesis of IGP and AICAR. The resulting ammonia molecule is channeled to the active site of HisF. This chain is Imidazole glycerol phosphate synthase subunit HisH, found in Geobacter metallireducens (strain ATCC 53774 / DSM 7210 / GS-15).